Reading from the N-terminus, the 92-residue chain is Small ribosomal subunit protein uS19 (92 aa).

Belongs to the universal ribosomal protein uS19 family.

Functionally, protein S19 forms a complex with S13 that binds strongly to the 16S ribosomal RNA. The sequence is that of Small ribosomal subunit protein uS19 from Bartonella bacilliformis (strain ATCC 35685 / KC583 / Herrer 020/F12,63).